Here is a 511-residue protein sequence, read N- to C-terminus: Histidine ammonia-lyase (511 aa).

The segment at residues 142–144 (ASG) is a cross-link (5-imidazolinone (Ala-Gly)). The residue at position 143 (Ser143) is a 2,3-didehydroalanine (Ser).

Belongs to the PAL/histidase family. Contains an active site 4-methylidene-imidazol-5-one (MIO), which is formed autocatalytically by cyclization and dehydration of residues Ala-Ser-Gly.

The protein localises to the cytoplasm. It carries out the reaction L-histidine = trans-urocanate + NH4(+). It functions in the pathway amino-acid degradation; L-histidine degradation into L-glutamate; N-formimidoyl-L-glutamate from L-histidine: step 1/3. This chain is Histidine ammonia-lyase, found in Phenylobacterium zucineum (strain HLK1).